Reading from the N-terminus, the 125-residue chain is Small ribosomal subunit protein uS13 (125 aa).

Residues 95–125 are disordered; the sequence is GLPVNGQRTRTNARTRKGVKKTVANKKKATK. Basic residues predominate over residues 105 to 125; that stretch reads TNARTRKGVKKTVANKKKATK.

Belongs to the universal ribosomal protein uS13 family. As to quaternary structure, part of the 30S ribosomal subunit. Forms a loose heterodimer with protein S19. Forms two bridges to the 50S subunit in the 70S ribosome.

In terms of biological role, located at the top of the head of the 30S subunit, it contacts several helices of the 16S rRNA. In the 70S ribosome it contacts the 23S rRNA (bridge B1a) and protein L5 of the 50S subunit (bridge B1b), connecting the 2 subunits; these bridges are implicated in subunit movement. Contacts the tRNAs in the A and P-sites. The sequence is that of Small ribosomal subunit protein uS13 from Leptospira biflexa serovar Patoc (strain Patoc 1 / Ames).